Reading from the N-terminus, the 407-residue chain is Proteasome-activating nucleotidase (407 aa).

The stretch at 22–67 (KEKTQIAELESKVLRLELKNKDISRENVQIKKENEILKRELDKLRI) forms a coiled coil. Residues 192-197 (GTGKTL) and histidine 331 each bind ATP. Residues 405–407 (MYG) are docks into pockets in the proteasome alpha-ring to cause gate opening.

This sequence belongs to the AAA ATPase family. As to quaternary structure, homohexamer. The hexameric complex has a two-ring architecture resembling a top hat that caps the 20S proteasome core at one or both ends. Upon ATP-binding, the C-terminus of PAN interacts with the alpha-rings of the proteasome core by binding to the intersubunit pockets.

The protein resides in the cytoplasm. In terms of biological role, ATPase which is responsible for recognizing, binding, unfolding and translocation of substrate proteins into the archaeal 20S proteasome core particle. Is essential for opening the gate of the 20S proteasome via an interaction with its C-terminus, thereby allowing substrate entry and access to the site of proteolysis. Thus, the C-termini of the proteasomal ATPase function like a 'key in a lock' to induce gate opening and therefore regulate proteolysis. Unfolding activity requires energy from ATP hydrolysis, whereas ATP binding alone promotes ATPase-20S proteasome association which triggers gate opening, and supports translocation of unfolded substrates. The protein is Proteasome-activating nucleotidase of Methanococcus maripaludis (strain C6 / ATCC BAA-1332).